The following is a 1396-amino-acid chain: ATP-dependent helicase/nuclease subunit A (1396 aa).

The disordered stretch occupies residues 1 to 25; that stretch reads MNREALCHDDPIGHDRLRPDSIPRD. The region spanning 26 to 532 is the UvrD-like helicase ATP-binding domain; sequence PKWTDEQWQA…IDLAKNFRSR (507 aa). 47–54 is an ATP binding site; the sequence is AAAGAGKT. Disordered regions lie at residues 590 to 649 and 1171 to 1205; these read DADG…GQPT and HSPE…PSPD. Positions 615-920 constitute a UvrD-like helicase C-terminal domain; the sequence is HKNIAKAGES…RIMSIHKSKG (306 aa). Low complexity predominate over residues 1181–1199; sequence TPPSLEIPPSLETPPSLET.

The protein belongs to the helicase family. AddA subfamily. In terms of assembly, heterodimer of AddA and AddB/RexB. The cofactor is Mg(2+).

The catalysed reaction is Couples ATP hydrolysis with the unwinding of duplex DNA by translocating in the 3'-5' direction.. It catalyses the reaction ATP + H2O = ADP + phosphate + H(+). Functionally, the heterodimer acts as both an ATP-dependent DNA helicase and an ATP-dependent, dual-direction single-stranded exonuclease. Recognizes the chi site generating a DNA molecule suitable for the initiation of homologous recombination. The AddA nuclease domain is required for chi fragment generation; this subunit has the helicase and 3' -&gt; 5' nuclease activities. The chain is ATP-dependent helicase/nuclease subunit A from Heliobacterium modesticaldum (strain ATCC 51547 / Ice1).